Here is a 54-residue protein sequence, read N- to C-terminus: Ribulose bisphosphate carboxylase large chain (54 aa).

A propeptide spanning residues 1–2 is cleaved from the precursor; sequence MS. At Pro3 the chain carries N-acetylproline. At Lys14 the chain carries N6,N6,N6-trimethyllysine.

The protein belongs to the RuBisCO large chain family. Type I subfamily. As to quaternary structure, heterohexadecamer of 8 large chains and 8 small chains.

The protein localises to the plastid. Its subcellular location is the chloroplast. The catalysed reaction is 2 (2R)-3-phosphoglycerate + 2 H(+) = D-ribulose 1,5-bisphosphate + CO2 + H2O. The enzyme catalyses D-ribulose 1,5-bisphosphate + O2 = 2-phosphoglycolate + (2R)-3-phosphoglycerate + 2 H(+). RuBisCO catalyzes two reactions: the carboxylation of D-ribulose 1,5-bisphosphate, the primary event in carbon dioxide fixation, as well as the oxidative fragmentation of the pentose substrate in the photorespiration process. Both reactions occur simultaneously and in competition at the same active site. This is Ribulose bisphosphate carboxylase large chain (rbcL) from Colletia hystrix (Crucifixion thorn).